The following is a 310-amino-acid chain: Homoserine kinase (310 aa).

91-101 (PIGSGLGSSAC) contributes to the ATP binding site.

Belongs to the GHMP kinase family. Homoserine kinase subfamily.

It localises to the cytoplasm. It catalyses the reaction L-homoserine + ATP = O-phospho-L-homoserine + ADP + H(+). It functions in the pathway amino-acid biosynthesis; L-threonine biosynthesis; L-threonine from L-aspartate: step 4/5. Its function is as follows. Catalyzes the ATP-dependent phosphorylation of L-homoserine to L-homoserine phosphate. This Shigella flexneri serotype 5b (strain 8401) protein is Homoserine kinase.